The chain runs to 369 residues: Anhydro-N-acetylmuramic acid kinase (369 aa).

12 to 19 (GTSMDGVD) is an ATP binding site.

The protein belongs to the anhydro-N-acetylmuramic acid kinase family.

It catalyses the reaction 1,6-anhydro-N-acetyl-beta-muramate + ATP + H2O = N-acetyl-D-muramate 6-phosphate + ADP + H(+). It participates in amino-sugar metabolism; 1,6-anhydro-N-acetylmuramate degradation. Its pathway is cell wall biogenesis; peptidoglycan recycling. Functionally, catalyzes the specific phosphorylation of 1,6-anhydro-N-acetylmuramic acid (anhMurNAc) with the simultaneous cleavage of the 1,6-anhydro ring, generating MurNAc-6-P. Is required for the utilization of anhMurNAc either imported from the medium or derived from its own cell wall murein, and thus plays a role in cell wall recycling. The chain is Anhydro-N-acetylmuramic acid kinase from Shewanella sp. (strain W3-18-1).